We begin with the raw amino-acid sequence, 534 residues long: Cytochrome c oxidase subunit 1 (534 aa).

The chain crosses the membrane as a helical span at residues 16–36 (VLYFMLAIFSGMAGTAMSLII). Residues E39, A42, and G44 each coordinate Ca(2+). 6 consecutive transmembrane segments (helical) span residues 57–77 (VLVV…ALIG), 101–121 (IAFW…LVES), 147–167 (AIFA…NFIV), 182–202 (LPLF…SLPV), 235–255 (LFYF…FGII), and 267–287 (VFGE…GFLV). Position 62 (H62) interacts with Fe(II)-heme a. Cu cation is bound at residue H241. Residues 241–245 (HPEVY) constitute a cross-link (1'-histidyl-3'-tyrosine (His-Tyr)). Y245 lines the O2 pocket. Positions 290 and 291 each coordinate Cu cation. 2 consecutive transmembrane segments (helical) span residues 310–330 (MIIA…IYGG) and 338–358 (MLYA…GVAL). Residues H368 and D369 each coordinate Mg(2+). Helical transmembrane passes span 372–392 (YVVG…LFAG) and 414–434 (FWLI…LGIN). H376 lines the heme a3 pocket. H378 serves as a coordination point for Fe(II)-heme a. P441 is a binding site for Ca(2+). Residues 452 to 472 (YVASIGSFIATLSLFLFIYIL) form a helical membrane-spanning segment.

It belongs to the heme-copper respiratory oxidase family. Component of the cytochrome c oxidase (complex IV, CIV), a multisubunit enzyme composed of a catalytic core of 3 subunits and several supernumerary subunits. The complex exists as a monomer or a dimer and forms supercomplexes (SCs) in the inner mitochondrial membrane with ubiquinol-cytochrome c oxidoreductase (cytochrome b-c1 complex, complex III, CIII). The cofactor is heme. Requires Cu cation as cofactor.

The protein localises to the mitochondrion inner membrane. The enzyme catalyses 4 Fe(II)-[cytochrome c] + O2 + 8 H(+)(in) = 4 Fe(III)-[cytochrome c] + 2 H2O + 4 H(+)(out). The protein operates within energy metabolism; oxidative phosphorylation. Its function is as follows. Component of the cytochrome c oxidase, the last enzyme in the mitochondrial electron transport chain which drives oxidative phosphorylation. The respiratory chain contains 3 multisubunit complexes succinate dehydrogenase (complex II, CII), ubiquinol-cytochrome c oxidoreductase (cytochrome b-c1 complex, complex III, CIII) and cytochrome c oxidase (complex IV, CIV), that cooperate to transfer electrons derived from NADH and succinate to molecular oxygen, creating an electrochemical gradient over the inner membrane that drives transmembrane transport and the ATP synthase. Cytochrome c oxidase is the component of the respiratory chain that catalyzes the reduction of oxygen to water. Electrons originating from reduced cytochrome c in the intermembrane space (IMS) are transferred via the dinuclear copper A center (CU(A)) of subunit 2 and heme A of subunit 1 to the active site in subunit 1, a binuclear center (BNC) formed by heme A3 and copper B (CU(B)). The BNC reduces molecular oxygen to 2 water molecules using 4 electrons from cytochrome c in the IMS and 4 protons from the mitochondrial matrix. The sequence is that of Cytochrome c oxidase subunit 1 (COXI) from Saccharomyces paradoxus (Yeast).